The following is a 126-amino-acid chain: Glycine cleavage system H protein (126 aa).

One can recognise a Lipoyl-binding domain in the interval 22 to 104 (TVTIGITEYA…YEKAWMVKVE (83 aa)). The residue at position 63 (Lys63) is an N6-lipoyllysine.

It belongs to the GcvH family. In terms of assembly, the glycine cleavage system is composed of four proteins: P, T, L and H. (R)-lipoate is required as a cofactor.

The glycine cleavage system catalyzes the degradation of glycine. The H protein shuttles the methylamine group of glycine from the P protein to the T protein. In terms of biological role, is also involved in protein lipoylation via its role as an octanoyl/lipoyl carrier protein intermediate. This is Glycine cleavage system H protein from Staphylococcus saprophyticus subsp. saprophyticus (strain ATCC 15305 / DSM 20229 / NCIMB 8711 / NCTC 7292 / S-41).